We begin with the raw amino-acid sequence, 377 residues long: Putative glutamate--cysteine ligase 2 (377 aa).

The protein belongs to the glutamate--cysteine ligase type 2 family. YbdK subfamily.

The enzyme catalyses L-cysteine + L-glutamate + ATP = gamma-L-glutamyl-L-cysteine + ADP + phosphate + H(+). Functionally, ATP-dependent carboxylate-amine ligase which exhibits weak glutamate--cysteine ligase activity. This is Putative glutamate--cysteine ligase 2 from Pseudomonas aeruginosa (strain LESB58).